The primary structure comprises 98 residues: Large ribosomal subunit protein uL23 (98 aa).

This sequence belongs to the universal ribosomal protein uL23 family. In terms of assembly, part of the 50S ribosomal subunit. Contacts protein L29, and trigger factor when it is bound to the ribosome.

One of the early assembly proteins it binds 23S rRNA. One of the proteins that surrounds the polypeptide exit tunnel on the outside of the ribosome. Forms the main docking site for trigger factor binding to the ribosome. The polypeptide is Large ribosomal subunit protein uL23 (Clostridium beijerinckii (strain ATCC 51743 / NCIMB 8052) (Clostridium acetobutylicum)).